The chain runs to 507 residues: Peroxisomal membrane protein PEX14 (507 aa).

2 stretches are compositionally biased toward polar residues: residues 1-10 (MATHQQTQPP) and 32-48 (EVQQ…SVFK). The tract at residues 1-52 (MATHQQTQPPSDFPALADENSQIPEATKPANEVQQATIAQDPPTSVFKNSEP) is disordered. Over 1–152 (MATHQQTQPP…QAAFLSRFRW (152 aa)) the chain is Peroxisomal. Involved in interaction with PEX5 stretches follow at residues 58–65 (IQNAIKFL) and 78–97 (RRSF…EAFR). Residues 153–173 (YHAILAVGVLAASGAGTAVFI) form a helical membrane-spanning segment. Residues 174-507 (KRSLIPRFKS…EQQHISQEGN (334 aa)) lie on the Cytoplasmic side of the membrane. Residues 288 to 302 (VTTARKPYTNGSNVD) are compositionally biased toward polar residues. Disordered regions lie at residues 288-329 (VTTA…PKSY), 344-394 (NIRE…NPRS), 409-435 (ANQN…QPPP), and 448-507 (PKPQ…QEGN). A compositionally biased stretch (low complexity) spans 308-322 (ARSASPPAAPADSSA). The span at 378–394 (QDESSNGQWWQQKNPRS) shows a compositional bias: polar residues.

It belongs to the peroxin-14 family. Interacts with PEX13; forming the PEX13-PEX14 docking complex. Interacts with PEX5 (via WxxxF/Y motifs). As to expression, expressed in flowers, siliques, leaves and roots.

The protein localises to the peroxisome membrane. Component of the PEX13-PEX14 docking complex, a translocon channel that specifically mediates the import of peroxisomal cargo proteins bound to PEX5 receptor. The PEX13-PEX14 docking complex forms a large import pore which can be opened to a diameter of about 9 nm. Mechanistically, PEX5 receptor along with cargo proteins associates with the PEX14 subunit of the PEX13-PEX14 docking complex in the cytosol, leading to the insertion of the receptor into the organelle membrane with the concomitant translocation of the cargo into the peroxisome matrix. This is Peroxisomal membrane protein PEX14 from Arabidopsis thaliana (Mouse-ear cress).